A 246-amino-acid chain; its full sequence is uncharacterized protein (246 aa).

Ser-194 carries the post-translational modification Phosphoserine.

This is an uncharacterized protein from Schizosaccharomyces pombe (strain 972 / ATCC 24843) (Fission yeast).